Reading from the N-terminus, the 348-residue chain is uncharacterized protein (348 aa).

This is an uncharacterized protein from Sulfolobus islandicus filamentous virus (isolate Iceland/Hveragerdi) (SIFV).